The following is a 135-amino-acid chain: D-ribose pyranase (135 aa).

The Proton donor role is filled by His20. Substrate-binding positions include Asp28, His102, and 124–126; that span reads YSN.

It belongs to the RbsD / FucU family. RbsD subfamily. As to quaternary structure, homodecamer.

The protein localises to the cytoplasm. The enzyme catalyses beta-D-ribopyranose = beta-D-ribofuranose. The protein operates within carbohydrate metabolism; D-ribose degradation; D-ribose 5-phosphate from beta-D-ribopyranose: step 1/2. Catalyzes the interconversion of beta-pyran and beta-furan forms of D-ribose. The polypeptide is D-ribose pyranase (Thermotoga petrophila (strain ATCC BAA-488 / DSM 13995 / JCM 10881 / RKU-1)).